Reading from the N-terminus, the 87-residue chain is Small ribosomal subunit protein uS17 (87 aa).

The protein belongs to the universal ribosomal protein uS17 family. As to quaternary structure, part of the 30S ribosomal subunit.

Functionally, one of the primary rRNA binding proteins, it binds specifically to the 5'-end of 16S ribosomal RNA. This is Small ribosomal subunit protein uS17 from Alkalilimnicola ehrlichii (strain ATCC BAA-1101 / DSM 17681 / MLHE-1).